Consider the following 446-residue polypeptide: Argininosuccinate lyase (446 aa).

Belongs to the lyase 1 family. Argininosuccinate lyase subfamily.

The protein localises to the cytoplasm. It catalyses the reaction 2-(N(omega)-L-arginino)succinate = fumarate + L-arginine. It participates in amino-acid biosynthesis; L-arginine biosynthesis; L-arginine from L-ornithine and carbamoyl phosphate: step 3/3. This chain is Argininosuccinate lyase, found in Phocaeicola vulgatus (strain ATCC 8482 / DSM 1447 / JCM 5826 / CCUG 4940 / NBRC 14291 / NCTC 11154) (Bacteroides vulgatus).